Here is a 222-residue protein sequence, read N- to C-terminus: Probable transcriptional regulator ycf29 (222 aa).

One can recognise a Response regulatory domain in the interval 4–120 (KLMLVENDIV…ELLSIINNLI (117 aa)). Aspartate 53 is subject to 4-aspartylphosphate. The region spanning 139-204 (QLNHKIRLTP…LLVKYSINNN (66 aa)) is the HTH luxR-type domain. The segment at residues 163–182 (NKEISTILNTSVRNVEKYVS) is a DNA-binding region (H-T-H motif).

It is found in the plastid. It localises to the chloroplast. The polypeptide is Probable transcriptional regulator ycf29 (ycf29) (Pyropia yezoensis (Susabi-nori)).